Here is a 254-residue protein sequence, read N- to C-terminus: Type III pantothenate kinase (254 aa).

Position 13 to 20 (13 to 20 (MIGNTRQH)) interacts with ATP. Residues Tyr84 and 88–91 (GLDR) contribute to the substrate site. Asp90 (proton acceptor) is an active-site residue. K(+) is bound at residue Asp110. Thr113 is an ATP binding site. Thr166 is a binding site for substrate.

The protein belongs to the type III pantothenate kinase family. As to quaternary structure, homodimer. It depends on NH4(+) as a cofactor. The cofactor is K(+).

It localises to the cytoplasm. The enzyme catalyses (R)-pantothenate + ATP = (R)-4'-phosphopantothenate + ADP + H(+). The protein operates within cofactor biosynthesis; coenzyme A biosynthesis; CoA from (R)-pantothenate: step 1/5. In terms of biological role, catalyzes the phosphorylation of pantothenate (Pan), the first step in CoA biosynthesis. The sequence is that of Type III pantothenate kinase from Thermosynechococcus vestitus (strain NIES-2133 / IAM M-273 / BP-1).